The sequence spans 187 residues: UPF0301 protein YqgE (187 aa).

It belongs to the UPF0301 (AlgH) family.

This chain is UPF0301 protein YqgE, found in Escherichia coli O139:H28 (strain E24377A / ETEC).